Here is a 266-residue protein sequence, read N- to C-terminus: Integral membrane protein 2B (266 aa).

Residues 1–54 (MVKVTFNSALAQKEAKKDESKSGEEALIIPPDAVAVDCKDPDEVVPVGQRRAWC) are Cytoplasmic-facing. A helical; Signal-anchor for type II membrane protein membrane pass occupies residues 55 to 75 (WCMCFGLAFMLAGVILGGAYL). Residues 76 to 266 (YKYFAFQPDD…RFAVETLICP (191 aa)) lie on the Lumenal side of the membrane. The segment at 102–134 (EPSADAPASRYQTIEENIKIFEEDEVEFISVPV) is necessary for interaction with APP and inhibitor effects on APP processing. The BRICHOS domain occupies 137 to 231 (FADSDPANIV…LCHDKETYKL (95 aa)). 2 cysteine pairs are disulfide-bonded: Cys164–Cys223 and Cys248–Cys265. The N-linked (GlcNAc...) asparagine glycan is linked to Asn170.

Belongs to the ITM2 family. As to quaternary structure, homodimer; disulfide-linked. Interacts with SPPL2A and SPPL2B. Interacts with APP. Mature BRI2 (mBRI2) interacts with the APP amyloid-beta A4 protein; the interaction occurs at the cell surface and in the endocytic compartments and enable alpha- and beta-secretase-induced APP cleavage inhibition. Mature BRI2 (mBRI2) interacts with the APP C99; the interaction occurs in the endocytic compartments and enable gamma-secretase-induced C99 cleavage inhibition. May form heterodimers with Bri23 peptide and APP amyloid-beta protein 40. Interacts with ADAM7 in sperm; the interaction increases following capacitation. Post-translationally, the ectodomain C-terminal part of the imBRI2 is processed by furin producing a secreted Bri23 peptide and a mature BRI2, membrane form (mBRI2). The remaining part of the ectodomain of mBRI2 containing the BRICHOS domain is cleaved by ADAM10 and is secreted (BRI2C, soluble form). The membrane-bound N-terminal fragment (BRI2C, membrane form) is further proteolytically processed by SPPL2A and SPPL2B through regulated intramembrane proteolysis producing a secreted C-peptide and a BRI2 intracellular domain (BRI2 ICD) released in the cytosol. Shedding by ADAM10 facilitates intramembrane cleavage but is not absolutely required for BRI2 ICD generation. In terms of processing, glycosylation at Asn-170 is important for cell surface localization, but doesn't affect furin- and ADAM10-induced proteolytic processing.

It localises to the golgi apparatus membrane. The protein localises to the cell membrane. The protein resides in the endosome membrane. Its subcellular location is the secreted. Functionally, plays a regulatory role in the processing of the amyloid-beta A4 precursor protein (APP) and acts as an inhibitor of the amyloid-beta peptide aggregation and fibrils deposition. Plays a role in the induction of neurite outgrowth. Functions as a protease inhibitor by blocking access of secretases to APP cleavage sites. In terms of biological role, mature BRI2 (mBRI2) functions as a modulator of the amyloid-beta A4 precursor protein (APP) processing leading to a strong reduction in the secretion of secretase-processed amyloid-beta protein 40 and amyloid-beta protein 42. Bri23 peptide prevents aggregation of APP amyloid-beta protein 42 into toxic oligomers. The protein is Integral membrane protein 2B (ITM2B) of Bos taurus (Bovine).